Consider the following 187-residue polypeptide: MVRYSASPALETKCAKARGAYLRTHFKNSREVAFTINGMSLKKAFIFLDNVKEHKQAVPFRRFNGGVGRTAQGKEFGVTQARWPVKSVKFFYDLLKNAEANAEAKGLDMDKLIIKHVQVNAAPKQRRRTYRAHGRVTAYLSSPSHIEIIVAEEEEAVPKANDTVSRVSLKQGAKARNLAARKAITAA.

The protein belongs to the universal ribosomal protein uL22 family. In terms of assembly, component of the large ribosomal subunit (LSU). Mature yeast ribosomes consist of a small (40S) and a large (60S) subunit. The 40S small subunit contains 1 molecule of ribosomal RNA (18S rRNA) and at least 33 different proteins. The large 60S subunit contains 3 rRNA molecules (25S, 5.8S and 5S rRNA) and at least 46 different proteins. uL22 is associated with the polypeptide exit tunnel.

The protein localises to the cytoplasm. Component of the ribosome, a large ribonucleoprotein complex responsible for the synthesis of proteins in the cell. The small ribosomal subunit (SSU) binds messenger RNAs (mRNAs) and translates the encoded message by selecting cognate aminoacyl-transfer RNA (tRNA) molecules. The large subunit (LSU) contains the ribosomal catalytic site termed the peptidyl transferase center (PTC), which catalyzes the formation of peptide bonds, thereby polymerizing the amino acids delivered by tRNAs into a polypeptide chain. The nascent polypeptides leave the ribosome through a tunnel in the LSU and interact with protein factors that function in enzymatic processing, targeting, and the membrane insertion of nascent chains at the exit of the ribosomal tunnel. This is Large ribosomal subunit protein uL22A (rpl1701) from Schizosaccharomyces pombe (strain 972 / ATCC 24843) (Fission yeast).